Here is a 203-residue protein sequence, read N- to C-terminus: Shikimate kinase (203 aa).

Position 32-37 (32-37 (GAGKTA)) interacts with ATP. Threonine 36 is a Mg(2+) binding site. Residues aspartate 54, arginine 78, and glycine 100 each coordinate substrate. Arginine 138 serves as a coordination point for ATP. Residue arginine 157 participates in substrate binding.

It belongs to the shikimate kinase family. In terms of assembly, monomer. The cofactor is Mg(2+).

The protein resides in the cytoplasm. The catalysed reaction is shikimate + ATP = 3-phosphoshikimate + ADP + H(+). The protein operates within metabolic intermediate biosynthesis; chorismate biosynthesis; chorismate from D-erythrose 4-phosphate and phosphoenolpyruvate: step 5/7. Its function is as follows. Catalyzes the specific phosphorylation of the 3-hydroxyl group of shikimic acid using ATP as a cosubstrate. This chain is Shikimate kinase, found in Mesorhizobium japonicum (strain LMG 29417 / CECT 9101 / MAFF 303099) (Mesorhizobium loti (strain MAFF 303099)).